The primary structure comprises 284 residues: Tropomyosin-1 (284 aa).

Disordered stretches follow at residues 1 to 26 and 96 to 124; these read MDAIKKKMQAMKLEKDNAMDKADTCE and EEDLEKSEERSGTAQQKLLEAQQSADENN. A coiled-coil region spans residues 1–276; sequence MDAIKKKMQA…YKSLADEMDS (276 aa). Residues 12–26 show a composition bias toward basic and acidic residues; that stretch reads KLEKDNAMDKADTCE. The span at 107-121 shows a compositional bias: polar residues; that stretch reads GTAQQKLLEAQQSAD.

This sequence belongs to the tropomyosin family. In terms of assembly, homodimer.

Tropomyosin, in association with the troponin complex, plays a central role in the calcium dependent regulation of muscle contraction. This Bombyx mori (Silk moth) protein is Tropomyosin-1.